The sequence spans 280 residues: Tryptophan synthase alpha chain (280 aa).

Active-site proton acceptor residues include Glu49 and Asp60.

This sequence belongs to the TrpA family. Tetramer of two alpha and two beta chains.

It carries out the reaction (1S,2R)-1-C-(indol-3-yl)glycerol 3-phosphate + L-serine = D-glyceraldehyde 3-phosphate + L-tryptophan + H2O. Its pathway is amino-acid biosynthesis; L-tryptophan biosynthesis; L-tryptophan from chorismate: step 5/5. Its function is as follows. The alpha subunit is responsible for the aldol cleavage of indoleglycerol phosphate to indole and glyceraldehyde 3-phosphate. The sequence is that of Tryptophan synthase alpha chain from Corynebacterium glutamicum (strain R).